Reading from the N-terminus, the 718-residue chain is Sodium/myo-inositol cotransporter (718 aa).

Residues 1–9 are Extracellular-facing; that stretch reads MRAVLETAD. The chain crosses the membrane as a helical span at residues 10–29; sequence IAIVALYFILVMCIGFFAMW. Over 30–38 the chain is Cytoplasmic; sequence KSNRSTVSG. Residues 39 to 57 form a helical membrane-spanning segment; that stretch reads YFLAGRSMTWVAIGASLFV. The Extracellular portion of the chain corresponds to 58-86; the sequence is SNIGSEHFIGLAGSGAASGFAVGAWEFNA. The helical transmembrane segment at 87-110 threads the bilayer; it reads LLLLQLLGWVFIPIYIRSGVYTMP. Residues 111–123 are Cytoplasmic-facing; sequence EYLSKRFGGHRIQ. The helical transmembrane segment at 124–144 threads the bilayer; it reads VYFAALSLILYIFTKLSVDLY. The Extracellular segment spans residues 145–157; sequence SGALFIQESMGWN. The chain crosses the membrane as a helical span at residues 158-183; it reads LYVSVILLIGMTALLTVTGGLVAVIY. The Cytoplasmic segment spans residues 184 to 186; the sequence is TDT. A helical transmembrane segment spans residues 187–205; it reads LQALLMIVGALTLMVISMM. Residues 206–303 lie on the Extracellular side of the membrane; it reads EIGGFEEVKR…HAKGSTLMAG (98 aa). N-linked (GlcNAc...) asparagine glycosylation is present at Asn232. Residues 304-324 traverse the membrane as a helical segment; the sequence is FLKLLPMFIIVVPGMISRILF. The Cytoplasmic segment spans residues 325–353; the sequence is ADDIACINPEHCMQVCGSRAGCSNIAYPR. The helical transmembrane segment at 354–376 threads the bilayer; the sequence is LVMKLVPVGLRGLMMAVMIAALM. At 377 to 406 the chain is on the extracellular side; it reads SDLDSIFNSASTIFTLDVYKLIRKSASSRE. The chain crosses the membrane as a helical span at residues 407-430; sequence LMIVGRIFVAFMVVISIAWVPIIV. Residues 431-443 are Cytoplasmic-facing; that stretch reads EMQGGQMYLYIQE. The helical transmembrane segment at 444-462 threads the bilayer; it reads VADYLTPPVAALFLLAIFW. Topologically, residues 463-510 are extracellular; the sequence is KRCNEQGAFYGGMAGFILVVVRLTLAFAYRAPECDQPDNRPVFIKDIH. Residues 511–532 traverse the membrane as a helical segment; it reads YMYVATALFWITGLITVIVSLL. Over 533–695 the chain is Cytoplasmic; that stretch reads TPPPTKEQIR…QMLEEPPQVK (163 aa). Phosphoserine is present on residues Ser594 and Ser632. A helical transmembrane segment spans residues 696 to 716; that stretch reads VILNIGLFGVCSLGIFMFVYF. Topologically, residues 717–718 are extracellular; the sequence is SL.

This sequence belongs to the sodium:solute symporter (SSF) (TC 2.A.21) family. In terms of assembly, interacts with KCNQ2 (via the pore module). Interacts with KCNQ1; this interaction is direct. Forms coregulatory complexes with ion channels KCNQ2-KCNQ3 and KCNQ1-KCNE2.

It localises to the apical cell membrane. It is found in the basolateral cell membrane. Functionally, electrogenic Na(+)-coupled sugar symporter that actively transports myo-inositol and its stereoisomer scyllo-inositol across the plasma membrane, with a Na(+) to sugar coupling ratio of 2:1. Maintains myo-inositol concentration gradient that defines cell volume and fluid balance during osmotic stress, in particular in the fetoplacental unit and central nervous system. Forms coregulatory complexes with voltage-gated K(+) ion channels, allosterically altering ion selectivity, voltage dependence and gating kinetics of the channel. In turn, K(+) efflux through the channel forms a local electrical gradient that modulates electrogenic Na(+)-coupled myo-inositol influx through the transporter. Associates with KCNQ1-KCNE2 channel in the apical membrane of choroid plexus epithelium and regulates the myo-inositol gradient between blood and cerebrospinal fluid with an impact on neuron excitability. Associates with KCNQ2-KCNQ3 channel altering ion selectivity, increasing Na(+) and Cs(+) permeation relative to K(+) permeation. Provides myo-inositol precursor for biosynthesis of phosphoinositides such as PI(4,5)P2, thus indirectly affecting the activity of phosphoinositide-dependent ion channels and Ca(2+) signaling upon osmotic stress. In Bos taurus (Bovine), this protein is Sodium/myo-inositol cotransporter (SLC5A3).